Consider the following 201-residue polypeptide: Protease (201 aa).

Catalysis depends on residues H55, D72, and C122.

This sequence belongs to the peptidase C5 family. As to quaternary structure, interacts with protease cofactor pVI-C; this interaction is necessary for protease activation.

The protein localises to the virion. It localises to the host nucleus. It catalyses the reaction Cleaves proteins of the adenovirus and its host cell at two consensus sites: -Yaa-Xaa-Gly-Gly-|-Xaa- and -Yaa-Xaa-Gly-Xaa-|-Gly- (in which Yaa is Met, Ile or Leu, and Xaa is any amino acid).. Requires DNA and protease cofactor for maximal activation. Inside nascent virions, becomes partially activated by binding to the viral DNA, allowing it to cleave the cofactor that binds to the protease and fully activates it. Actin, like the viral protease cofactor, seems to act as a cofactor in the cleavage of cytokeratin 18 and of actin itself. In terms of biological role, cleaves viral precursor proteins (pTP, pIIIa, pVI, pVII, pVIII, and pX) inside newly assembled particles giving rise to mature virions. Protease complexed to its cofactor slides along the viral DNA to specifically locate and cleave the viral precursors. Mature virions have a weakened organization compared to the unmature virions, thereby facilitating subsequent uncoating. Without maturation, the particle lacks infectivity and is unable to uncoat. Late in adenovirus infection, in the cytoplasm, may participate in the cytoskeleton destruction. Cleaves host cell cytoskeletal keratins K7 and K18. The polypeptide is Protease (Pantherophis guttatus (Corn snake)).